Consider the following 180-residue polypeptide: Nucleoside triphosphate/diphosphate phosphatase (180 aa).

Arg26 (proton donor) is an active-site residue. Residues Asn90, Asp106, Asp108, Asp110, Asp123, and Glu126 each coordinate Mg(2+).

The protein belongs to the Ntdp family. The cofactor is Mg(2+).

The catalysed reaction is a ribonucleoside 5'-triphosphate + H2O = a ribonucleoside 5'-diphosphate + phosphate + H(+). It carries out the reaction a ribonucleoside 5'-diphosphate + H2O = a ribonucleoside 5'-phosphate + phosphate + H(+). In terms of biological role, has nucleoside phosphatase activity towards nucleoside triphosphates and nucleoside diphosphates. This is Nucleoside triphosphate/diphosphate phosphatase from Staphylococcus saprophyticus subsp. saprophyticus (strain ATCC 15305 / DSM 20229 / NCIMB 8711 / NCTC 7292 / S-41).